We begin with the raw amino-acid sequence, 51 residues long: Protein HokD (51 aa).

The chain crosses the membrane as a helical span at residues 5–25 (KAMLIALIVICLTVIVTALVT).

Belongs to the Hok/Gef family.

Its subcellular location is the cell inner membrane. In terms of biological role, toxic component of a type I toxin-antitoxin (TA) system. When overexpressed kills cells within minutes; causes collapse of the transmembrane potential and arrest of respiration. Its toxic effect is probably neutralized by an antisense antitoxin Sok RNA. The polypeptide is Protein HokD (hokD) (Escherichia coli O157:H7).